We begin with the raw amino-acid sequence, 190 residues long: Prostaglandin-H2 D-isomerase (190 aa).

Residues 1–22 form the signal peptide; the sequence is MATHHTLWMGLALLGVLGDLQA. Residue Asn51 is glycosylated (N-linked (GlcNAc...) asparagine). The active-site Nucleophile is the Cys65. The N-linked (GlcNAc...) asparagine glycan is linked to Asn78. A disulfide bridge links Cys89 with Cys186.

Belongs to the calycin superfamily. Lipocalin family. As to quaternary structure, monomer.

The protein localises to the rough endoplasmic reticulum. It is found in the nucleus membrane. Its subcellular location is the golgi apparatus. It localises to the cytoplasm. The protein resides in the perinuclear region. The protein localises to the secreted. It carries out the reaction prostaglandin H2 = prostaglandin D2. Catalyzes the conversion of PGH2 to PGD2, a prostaglandin involved in smooth muscle contraction/relaxation and a potent inhibitor of platelet aggregation. Involved in a variety of CNS functions, such as sedation, NREM sleep and PGE2-induced allodynia, and may have an anti-apoptotic role in oligodendrocytes. Binds small non-substrate lipophilic molecules, including biliverdin, bilirubin, retinal, retinoic acid and thyroid hormone, and may act as a scavenger for harmful hydrophobic molecules and as a secretory retinoid and thyroid hormone transporter. Possibly involved in development and maintenance of the blood-brain, blood-retina, blood-aqueous humor and blood-testis barrier. It is likely to play important roles in both maturation and maintenance of the central nervous system and male reproductive system. Involved in PLA2G3-dependent maturation of mast cells. PLA2G3 is secreted by immature mast cells and acts on nearby fibroblasts upstream to PTDGS to synthesize PGD2, which in turn promotes mast cell maturation and degranulation via PTGDR. The polypeptide is Prostaglandin-H2 D-isomerase (PTGDS) (Gorilla gorilla gorilla (Western lowland gorilla)).